A 132-amino-acid chain; its full sequence is Small ribosomal subunit protein uS8c (132 aa).

It belongs to the universal ribosomal protein uS8 family. Part of the 30S ribosomal subunit.

The protein resides in the plastid. The protein localises to the chloroplast. Its function is as follows. One of the primary rRNA binding proteins, it binds directly to 16S rRNA central domain where it helps coordinate assembly of the platform of the 30S subunit. The protein is Small ribosomal subunit protein uS8c (rps8) of Guillardia theta (Cryptophyte).